The chain runs to 204 residues: Sex-determining region Y protein (204 aa).

The interval 59-136 (RVKRPMNAFI…YKYRPRRKAK (78 aa)) is sufficient for interaction with KPNB1. A DNA-binding region (HMG box) is located at residues 60–128 (VKRPMNAFIV…MHREKYPNYK (69 aa)). Required for nuclear localization stretches follow at residues 61 to 77 (KRPM…QRRK) and 130 to 136 (RPRRKAK). Residues 107–139 (WPFFQEAQKLQAMHREKYPNYKYRPRRKAKMLP) form a sufficient for interaction with EP300 region. An N6-acetyllysine modification is found at Lys-136. Positions 138–155 (LPKNCSLLPADPASVLCS) are necessary for interaction with ZNF208 isoform KRAB-O. The interval 175-204 (RMEHQLGHLPPINAASSPQQRDRYSHWTKL) is disordered. Residues 194-204 (QRDRYSHWTKL) show a composition bias toward basic and acidic residues. Residues 198-204 (YSHWTKL) form a necessary for interaction with SLC9A3R2 region.

It belongs to the SRY family. In terms of assembly, interacts with CALM, EP300, HDAC3, KPNB1, ZNF208 isoform KRAB-O, PARP1, SLC9A3R2 and WT1. The interaction with EP300 modulates its DNA-binding activity. The interaction with KPNB1 is sensitive to dissociation by Ran in the GTP-bound form. Interaction with PARP1 impaired its DNA-binding activity. In terms of processing, phosphorylated on serine residues by PKA. Phosphorylation by PKA enhances its DNA-binding activity and stimulates transcription repression. Acetylation of Lys-136 contributes to its nuclear localization and enhances its interaction with KPNB1. Deacetylated by HDAC3. Post-translationally, poly-ADP-ribosylated by PARP1. ADP-ribosylation reduces its DNA-binding activity.

The protein resides in the nucleus speckle. It localises to the cytoplasm. The protein localises to the nucleus. Transcriptional regulator that controls a genetic switch in male development. It is necessary and sufficient for initiating male sex determination by directing the development of supporting cell precursors (pre-Sertoli cells) as Sertoli rather than granulosa cells. Involved in different aspects of gene regulation including promoter activation or repression. Binds to the DNA consensus sequence 5'-[AT]AACAA[AT]-3'. SRY HMG box recognizes DNA by partial intercalation in the minor groove and promotes DNA bending. Also involved in pre-mRNA splicing. In male adult brain involved in the maintenance of motor functions of dopaminergic neurons. The protein is Sex-determining region Y protein of Homo sapiens (Human).